The primary structure comprises 329 residues: Pantothenate kinase (329 aa).

A disordered region spans residues 1–22; that stretch reads MPAQGPSHGELPPADAGRESSP. 107 to 114 is a binding site for ATP; the sequence is GSVAVGKS.

The protein belongs to the prokaryotic pantothenate kinase family.

The protein resides in the cytoplasm. It carries out the reaction (R)-pantothenate + ATP = (R)-4'-phosphopantothenate + ADP + H(+). It participates in cofactor biosynthesis; coenzyme A biosynthesis; CoA from (R)-pantothenate: step 1/5. In Nocardioides sp. (strain ATCC BAA-499 / JS614), this protein is Pantothenate kinase.